The following is a 231-amino-acid chain: Transcriptional regulatory protein KdpE (231 aa).

The region spanning lysine 4 to glutamate 117 is the Response regulatory domain. Aspartate 53 carries the 4-aspartylphosphate modification. The ompR/PhoB-type DNA-binding region spans asparagine 127–glutamine 227.

Post-translationally, phosphorylated by KdpD. Phosphorylation is required for transcriptional activity.

Its function is as follows. Member of the two-component regulatory system KdpD/KdpE that regulates the transcription of a series of virulence factors through sensing external K(+) concentrations. Also regulates capsular polysaccharide synthesis. Upon phosphorylation by KpdD, functions as a transcriptional regulator by direct binding to promoter regions of target genes including spa, hla, aur and geh. Represses the transcription of kdpFABC operon. This is Transcriptional regulatory protein KdpE from Staphylococcus aureus (strain NCTC 8325 / PS 47).